The primary structure comprises 418 residues: Acetylornithine aminotransferase (418 aa).

Pyridoxal 5'-phosphate-binding positions include 116–117 and F149; that span reads GA. Residue R152 coordinates N(2)-acetyl-L-ornithine. 240-243 provides a ligand contact to pyridoxal 5'-phosphate; it reads DEVQ. K269 carries the post-translational modification N6-(pyridoxal phosphate)lysine. Residue S296 participates in N(2)-acetyl-L-ornithine binding. Residue T297 participates in pyridoxal 5'-phosphate binding.

The protein belongs to the class-III pyridoxal-phosphate-dependent aminotransferase family. ArgD subfamily. Homodimer. Requires pyridoxal 5'-phosphate as cofactor.

It is found in the cytoplasm. The enzyme catalyses N(2)-acetyl-L-ornithine + 2-oxoglutarate = N-acetyl-L-glutamate 5-semialdehyde + L-glutamate. It participates in amino-acid biosynthesis; L-arginine biosynthesis; N(2)-acetyl-L-ornithine from L-glutamate: step 4/4. The chain is Acetylornithine aminotransferase from Prochlorococcus marinus (strain MIT 9313).